A 333-amino-acid chain; its full sequence is Ferrochelatase (333 aa).

The Fe cation site is built by His-202 and Glu-284.

This sequence belongs to the ferrochelatase family.

It localises to the cytoplasm. The catalysed reaction is heme b + 2 H(+) = protoporphyrin IX + Fe(2+). The protein operates within porphyrin-containing compound metabolism; protoheme biosynthesis; protoheme from protoporphyrin-IX: step 1/1. In terms of biological role, catalyzes the ferrous insertion into protoporphyrin IX. The protein is Ferrochelatase of Francisella tularensis subsp. novicida (strain U112).